Reading from the N-terminus, the 346-residue chain is Dimethylallyltranstransferase (346 aa).

Isopentenyl diphosphate contacts are provided by K96, R99, and H128. The Mg(2+) site is built by D135 and D141. R147 serves as a coordination point for isopentenyl diphosphate.

Belongs to the FPP/GGPP synthase family. It depends on Mg(2+) as a cofactor.

It carries out the reaction isopentenyl diphosphate + dimethylallyl diphosphate = (2E)-geranyl diphosphate + diphosphate. It participates in isoprenoid biosynthesis; geranyl diphosphate biosynthesis; geranyl diphosphate from dimethylallyl diphosphate and isopentenyl diphosphate: step 1/1. Its function is as follows. Prenyltransferase involved in the biosynthesis of ambiguines, a family of hapalindole-type alkaloids. Catalyzes the addition of isopentenyl diphosphate (IPP) onto dimethylallyl diphosphate (DMAPP) to form geranyl pyrophosphate (GPP). Cannot use farnesyl diphosphate (FPP) or geranylgeranyl diphosphate (GGPP). This is Dimethylallyltranstransferase from Fischerella ambigua (strain UTEX 1903).